A 248-amino-acid chain; its full sequence is MYKLVLVRHGESEWNKENLFTGWTDVKLSDKGINEALEAGLLLKQEGYSFDIAFSSLLSRANDTLNIILRELGQSYISVKKTWRLNERHYGALQGLNKSETAAKYGEGKVLIWRRSYDVPPMSLDESEDRHPIKDPRYKYIPKRELPSTECLKDTVTRVIPYWTDEIAKEVLGGKKVIVAAHGNSLRALVKYLDNLSEEDVLKLNIPTGIPLVYELDKDLNPIKHYYLGDESKIKSAMESVASQGKLK.

Substrate-binding positions include 8-15 (RHGESEWN), 21-22 (TG), R60, 87-90 (ERHY), K98, 114-115 (RR), and 183-184 (GN). Residue H9 is the Tele-phosphohistidine intermediate of the active site. E87 (proton donor/acceptor) is an active-site residue.

Belongs to the phosphoglycerate mutase family. BPG-dependent PGAM subfamily.

The enzyme catalyses (2R)-2-phosphoglycerate = (2R)-3-phosphoglycerate. It functions in the pathway carbohydrate degradation; glycolysis; pyruvate from D-glyceraldehyde 3-phosphate: step 3/5. Catalyzes the interconversion of 2-phosphoglycerate and 3-phosphoglycerate. The protein is 2,3-bisphosphoglycerate-dependent phosphoglycerate mutase of Borrelia garinii subsp. bavariensis (strain ATCC BAA-2496 / DSM 23469 / PBi) (Borreliella bavariensis).